The chain runs to 465 residues: NADH-quinone oxidoreductase subunit N (465 aa).

The next 13 helical transmembrane spans lie at 9 to 29, 44 to 64, 73 to 93, 110 to 130, 159 to 179, 198 to 218, 235 to 255, 265 to 285, 292 to 312, 327 to 347, 371 to 391, 405 to 427, and 444 to 464; these read FNFVLLFPVLSLLFWAIVLLL, ASIIALFSTLCFLLIYNGFVL, LFVSDNYAIFAQIVILVFSML, FLFMIASLILMISSTNLIVIF, YFTLAAVGAGFFVFACAFVYL, PILLCAGVMFLVIVGVKLSIA, FIAFISIVPKIAMIIVVLRIF, EYIVALLAIFSMLAVSIVALI, MLAYSSITHSSFILAVIVSSM, IFALFVYWISFAFANYGIFLI, IMLAIFILCIAGIPPFGIFWG, YALVFAVALSSMIMLYAYLKILI, and VKQKIILCLCLIGSVSCVFLL.

This sequence belongs to the complex I subunit 2 family. In terms of assembly, NDH-1 is composed of 14 different subunits. Subunits NuoA, H, J, K, L, M, N constitute the membrane sector of the complex.

It localises to the cell inner membrane. The enzyme catalyses a quinone + NADH + 5 H(+)(in) = a quinol + NAD(+) + 4 H(+)(out). Its function is as follows. NDH-1 shuttles electrons from NADH, via FMN and iron-sulfur (Fe-S) centers, to quinones in the respiratory chain. The immediate electron acceptor for the enzyme in this species is believed to be ubiquinone. Couples the redox reaction to proton translocation (for every two electrons transferred, four hydrogen ions are translocated across the cytoplasmic membrane), and thus conserves the redox energy in a proton gradient. The protein is NADH-quinone oxidoreductase subunit N of Campylobacter lari (strain RM2100 / D67 / ATCC BAA-1060).